The primary structure comprises 222 residues: Germin-like protein subfamily 1 member 20 (222 aa).

Residues Met1–Ala22 form the signal peptide. A disulfide bridge connects residues Cys32 and Cys48. The Cupin type-1 domain occupies Ser62–Lys213. Asn77 is a glycosylation site (N-linked (GlcNAc...) asparagine). Residues His110, His112, Glu117, and His159 each contribute to the Mn(2+) site.

This sequence belongs to the germin family. In terms of assembly, oligomer (believed to be a pentamer but probably hexamer). In terms of tissue distribution, expressed in stems and developing embryos.

It localises to the secreted. It is found in the extracellular space. The protein localises to the apoplast. Functionally, may play a role in plant defense. Probably has no oxalate oxidase activity even if the active site is conserved. This chain is Germin-like protein subfamily 1 member 20 (GLP5A), found in Arabidopsis thaliana (Mouse-ear cress).